Consider the following 186-residue polypeptide: Lipid A palmitoyltransferase PagP (186 aa).

A signal peptide spans 1-25 (MNVSKYVAIFSFVFIQLISVGKVFA). Active-site residues include H58, D101, and S102.

The protein belongs to the lipid A palmitoyltransferase family. As to quaternary structure, homodimer.

The protein localises to the cell outer membrane. The enzyme catalyses lipid A (E. coli) + a 1-hexadecanoyl-2-acyl-sn-glycero-3-phosphocholine = hepta-acyl lipid A (E. coli) + a 2-acyl-sn-glycero-3-phosphocholine. The catalysed reaction is lipid IIA + a 1-hexadecanoyl-2-acyl-sn-glycero-3-phosphocholine = lipid IIB + a 2-acyl-sn-glycero-3-phosphocholine. It carries out the reaction lipid IVA (E. coli) + a 1-hexadecanoyl-2-acyl-sn-glycero-3-phosphocholine = lipid IVB (E. coli) + a 2-acyl-sn-glycero-3-phosphocholine. Transfers a palmitate residue from the sn-1 position of a phospholipid to the N-linked hydroxymyristate on the proximal unit of lipid A or its precursors. The protein is Lipid A palmitoyltransferase PagP of Escherichia coli O157:H7.